The primary structure comprises 489 residues: Sphingolipid C9-methyltransferase (489 aa).

Transmembrane regions (helical) follow at residues 29–49 (GAKNFSNWLLLGLLTGVPLFV) and 59–79 (TFIFFFILFAIPILMAYWTVL). Residues 202-203 (YT), 239-247 (LLDLGCGWG), 265-270 (TLGKNQ), and 295-296 (YR) each bind S-adenosyl-L-methionine.

This sequence belongs to the CFA/CMAS family.

It localises to the membrane. The catalysed reaction is a (4E,8E)-4-sphinga-4,8-dienine ceramide + S-adenosyl-L-methionine = a 9-methyl-(4E,8E)-sphinga-4,8-dienine ceramide + S-adenosyl-L-homocysteine + H(+). Its pathway is lipid metabolism; sphingolipid metabolism. Its function is as follows. Catalyzes methylation of the sphingoid base component of glucosylceramides (GluCers) at the C9-position. Sphingolipid C9-methylation requires 4,8-desaturated ceramides as substrates. Glucosylceramides play important roles in growth, differentiation and pathogenicity. The methyl group at the C9-position distinguishes fungal glucosylceramides from those of plants and animals, and may thus play a role in host-pathogen interactions enabling the host to recognize the fungal attack and initiate specific defense responses. The sequence is that of Sphingolipid C9-methyltransferase from Komagataella phaffii (strain GS115 / ATCC 20864) (Yeast).